A 100-amino-acid chain; its full sequence is Urease subunit gamma (100 aa).

It belongs to the urease gamma subunit family. As to quaternary structure, heterotrimer of UreA (gamma), UreB (beta) and UreC (alpha) subunits. Three heterotrimers associate to form the active enzyme.

It localises to the cytoplasm. It carries out the reaction urea + 2 H2O + H(+) = hydrogencarbonate + 2 NH4(+). Its pathway is nitrogen metabolism; urea degradation; CO(2) and NH(3) from urea (urease route): step 1/1. The polypeptide is Urease subunit gamma (Acetivibrio thermocellus (strain ATCC 27405 / DSM 1237 / JCM 9322 / NBRC 103400 / NCIMB 10682 / NRRL B-4536 / VPI 7372) (Clostridium thermocellum)).